The following is a 185-amino-acid chain: Ribosome-recycling factor (185 aa).

It belongs to the RRF family.

It is found in the cytoplasm. Functionally, responsible for the release of ribosomes from messenger RNA at the termination of protein biosynthesis. May increase the efficiency of translation by recycling ribosomes from one round of translation to another. The sequence is that of Ribosome-recycling factor from Thermotoga sp. (strain RQ2).